Consider the following 315-residue polypeptide: 4-hydroxy-3-methylbut-2-enyl diphosphate reductase (315 aa).

[4Fe-4S] cluster is bound at residue Cys12. 2 residues coordinate (2E)-4-hydroxy-3-methylbut-2-enyl diphosphate: His43 and His81. Residues His43 and His81 each contribute to the dimethylallyl diphosphate site. The isopentenyl diphosphate site is built by His43 and His81. Residue Cys103 coordinates [4Fe-4S] cluster. A (2E)-4-hydroxy-3-methylbut-2-enyl diphosphate-binding site is contributed by His131. A dimethylallyl diphosphate-binding site is contributed by His131. An isopentenyl diphosphate-binding site is contributed by His131. The Proton donor role is filled by Glu133. Thr172 serves as a coordination point for (2E)-4-hydroxy-3-methylbut-2-enyl diphosphate. Cys200 contacts [4Fe-4S] cluster. Residues Ser228, Asn230, and Ser273 each coordinate (2E)-4-hydroxy-3-methylbut-2-enyl diphosphate. Positions 228, 230, and 273 each coordinate dimethylallyl diphosphate. Isopentenyl diphosphate contacts are provided by Ser228, Asn230, and Ser273.

Belongs to the IspH family. [4Fe-4S] cluster is required as a cofactor.

The enzyme catalyses isopentenyl diphosphate + 2 oxidized [2Fe-2S]-[ferredoxin] + H2O = (2E)-4-hydroxy-3-methylbut-2-enyl diphosphate + 2 reduced [2Fe-2S]-[ferredoxin] + 2 H(+). The catalysed reaction is dimethylallyl diphosphate + 2 oxidized [2Fe-2S]-[ferredoxin] + H2O = (2E)-4-hydroxy-3-methylbut-2-enyl diphosphate + 2 reduced [2Fe-2S]-[ferredoxin] + 2 H(+). It participates in isoprenoid biosynthesis; dimethylallyl diphosphate biosynthesis; dimethylallyl diphosphate from (2E)-4-hydroxy-3-methylbutenyl diphosphate: step 1/1. The protein operates within isoprenoid biosynthesis; isopentenyl diphosphate biosynthesis via DXP pathway; isopentenyl diphosphate from 1-deoxy-D-xylulose 5-phosphate: step 6/6. Catalyzes the conversion of 1-hydroxy-2-methyl-2-(E)-butenyl 4-diphosphate (HMBPP) into a mixture of isopentenyl diphosphate (IPP) and dimethylallyl diphosphate (DMAPP). Acts in the terminal step of the DOXP/MEP pathway for isoprenoid precursor biosynthesis. The polypeptide is 4-hydroxy-3-methylbut-2-enyl diphosphate reductase (Exiguobacterium sibiricum (strain DSM 17290 / CCUG 55495 / CIP 109462 / JCM 13490 / 255-15)).